Here is a 334-residue protein sequence, read N- to C-terminus: Biotin synthase (334 aa).

The region spanning 48-275 is the Radical SAM core domain; it reads NQVQTSQLLS…RSMVRLSAGR (228 aa). [4Fe-4S] cluster contacts are provided by Cys-63, Cys-67, and Cys-70. [2Fe-2S] cluster is bound by residues Cys-107, Cys-138, Cys-198, and Arg-270.

It belongs to the radical SAM superfamily. Biotin synthase family. As to quaternary structure, homodimer. The cofactor is [4Fe-4S] cluster. [2Fe-2S] cluster serves as cofactor.

The catalysed reaction is (4R,5S)-dethiobiotin + (sulfur carrier)-SH + 2 reduced [2Fe-2S]-[ferredoxin] + 2 S-adenosyl-L-methionine = (sulfur carrier)-H + biotin + 2 5'-deoxyadenosine + 2 L-methionine + 2 oxidized [2Fe-2S]-[ferredoxin]. It functions in the pathway cofactor biosynthesis; biotin biosynthesis; biotin from 7,8-diaminononanoate: step 2/2. Catalyzes the conversion of dethiobiotin (DTB) to biotin by the insertion of a sulfur atom into dethiobiotin via a radical-based mechanism. The chain is Biotin synthase from Maricaulis maris (strain MCS10) (Caulobacter maris).